A 509-amino-acid chain; its full sequence is tRNA-2-methylthio-N(6)-dimethylallyladenosine synthase (509 aa).

A compositionally biased stretch (polar residues) spans 1 to 15 (MNEQQRLASQQVNSS). Residues 1-26 (MNEQQRLASQQVNSSTKKEEKDYSKY) form a disordered region. The segment covering 16–25 (TKKEEKDYSK) has biased composition (basic and acidic residues). The 119-residue stretch at 66–184 (RKFYIRTYGC…LPYILKDAMF (119 aa)) folds into the MTTase N-terminal domain. Positions 75, 111, 145, 221, 225, and 228 each coordinate [4Fe-4S] cluster. In terms of domain architecture, Radical SAM core spans 207-437 (RRGDIKAWVN…NALVNKLAIE (231 aa)). In terms of domain architecture, TRAM spans 440–503 (DRYKGQIVEV…TWSLNGELVE (64 aa)).

Belongs to the methylthiotransferase family. MiaB subfamily. Monomer. It depends on [4Fe-4S] cluster as a cofactor.

Its subcellular location is the cytoplasm. The catalysed reaction is N(6)-dimethylallyladenosine(37) in tRNA + (sulfur carrier)-SH + AH2 + 2 S-adenosyl-L-methionine = 2-methylsulfanyl-N(6)-dimethylallyladenosine(37) in tRNA + (sulfur carrier)-H + 5'-deoxyadenosine + L-methionine + A + S-adenosyl-L-homocysteine + 2 H(+). Catalyzes the methylthiolation of N6-(dimethylallyl)adenosine (i(6)A), leading to the formation of 2-methylthio-N6-(dimethylallyl)adenosine (ms(2)i(6)A) at position 37 in tRNAs that read codons beginning with uridine. The polypeptide is tRNA-2-methylthio-N(6)-dimethylallyladenosine synthase (Bacillus cereus (strain ZK / E33L)).